We begin with the raw amino-acid sequence, 461 residues long: MLKIFNTLSRQKEEFKPIHAGKVGMYVCGITIYDLCHIGHGRTFVAFDVVARYLRYLGYSLTYVRNVTDVDDKIIKRAIENNETCEQLTTRMLAEMHKDFDALNLERPDLEPRATHHIAEIIEMTERLIARGHAYVASNGDVMFAVDSDPDYGVLSRQDLDQLQAGARVEVADVKRNPMDFVLWKMSKPGEPRWESPWGPGRPGWHIECSAMNGKQLGAHFDIHGGGSDLMFPHHENEIAQSTCAHDGPYVNYWMHSGMVMIDKEKMSKSLNNFFTIRDVLAYYDAETVRYFLMSGHYRSQLNYSEENLKQARASLERLYTALRGTDANATPAGGVEFEARFRTAMDDDFNTPEAYSVLFDIAREVNRLKNEDMAAANGLAAELRKLAQVLGLLEQDPELFLQGGAQADDDEVAKIEALIKQRNDARSSKDWALADAARDQLNDLGIVLEDGPQGTTWRRK.

Cys28 is a Zn(2+) binding site. The 'HIGH' region motif lies at 30-40 (ITIYDLCHIGH). Zn(2+) is bound by residues Cys209, His234, and Glu238. The short motif at 266–270 (KMSKS) is the 'KMSKS' region element. Lys269 is an ATP binding site.

It belongs to the class-I aminoacyl-tRNA synthetase family. Monomer. Zn(2+) is required as a cofactor.

The protein resides in the cytoplasm. The catalysed reaction is tRNA(Cys) + L-cysteine + ATP = L-cysteinyl-tRNA(Cys) + AMP + diphosphate. The sequence is that of Cysteine--tRNA ligase from Yersinia pseudotuberculosis serotype O:3 (strain YPIII).